We begin with the raw amino-acid sequence, 213 residues long: ATP-dependent dethiobiotin synthetase BioD (213 aa).

12–17 (NVGKTF) provides a ligand contact to ATP. Residue Thr-16 coordinates Mg(2+). The active site involves Lys-36. Residue Ser-40 participates in substrate binding. ATP-binding positions include Asp-53, 110–113 (EGTG), and 170–171 (NQ). The Mg(2+) site is built by Asp-53 and Glu-110.

This sequence belongs to the dethiobiotin synthetase family. As to quaternary structure, homodimer. Mg(2+) serves as cofactor.

It localises to the cytoplasm. It catalyses the reaction (7R,8S)-7,8-diammoniononanoate + CO2 + ATP = (4R,5S)-dethiobiotin + ADP + phosphate + 3 H(+). It participates in cofactor biosynthesis; biotin biosynthesis; biotin from 7,8-diaminononanoate: step 1/2. Functionally, catalyzes a mechanistically unusual reaction, the ATP-dependent insertion of CO2 between the N7 and N8 nitrogen atoms of 7,8-diaminopelargonic acid (DAPA, also called 7,8-diammoniononanoate) to form a ureido ring. This is ATP-dependent dethiobiotin synthetase BioD from Ruthia magnifica subsp. Calyptogena magnifica.